A 136-amino-acid chain; its full sequence is Histone H3.1t (136 aa).

Positions 1–43 (MARTKQTARKSTGGKAPRKQLATKVARKSAPATGGVKKPHRYR) are disordered. Arginine 3 is modified (asymmetric dimethylarginine; by PRMT6; alternate). Arginine 3 bears the Citrulline; alternate mark. Threonine 4 is modified (phosphothreonine; by HASPIN). Lysine 5 carries the post-translational modification Allysine; alternate. An N6,N6,N6-trimethyllysine; alternate modification is found at lysine 5. The residue at position 5 (lysine 5) is an N6,N6-dimethyllysine; alternate. Lysine 5 carries the post-translational modification N6-(2-hydroxyisobutyryl)lysine; alternate. N6-(beta-hydroxybutyryl)lysine; alternate is present on lysine 5. Lysine 5 carries the N6-acetyllysine; alternate modification. Lysine 5 is subject to N6-methyllysine; alternate. 5-glutamyl dopamine; alternate is present on glutamine 6. Glutamine 6 carries the post-translational modification 5-glutamyl serotonin; alternate. At threonine 7 the chain carries Phosphothreonine; by PKC. Arginine 9 is subject to Citrulline; alternate. The residue at position 9 (arginine 9) is a Symmetric dimethylarginine; by PRMT5; alternate. Lysine 10 bears the N6,N6,N6-trimethyllysine; alternate mark. N6,N6-dimethyllysine; alternate is present on lysine 10. At lysine 10 the chain carries N6-(2-hydroxyisobutyryl)lysine; alternate. Lysine 10 is subject to N6-(beta-hydroxybutyryl)lysine; alternate. At lysine 10 the chain carries N6-acetyllysine; alternate. Position 10 is an N6-methyllysine; alternate (lysine 10). At lysine 10 the chain carries N6-lactoyllysine; alternate. Serine 11 is subject to ADP-ribosylserine; alternate. Serine 11 carries the phosphoserine; alternate; by AURKB, AURKC, RPS6KA3, RPS6KA4 and RPS6KA5 modification. At threonine 12 the chain carries Phosphothreonine; by PKC. Lysine 15 carries the N6-(2-hydroxyisobutyryl)lysine; alternate modification. N6-(beta-hydroxybutyryl)lysine; alternate is present on lysine 15. Lysine 15 bears the N6-acetyllysine; alternate mark. Lysine 15 bears the N6-lactoyllysine; alternate mark. Lysine 15 carries the N6-glutaryllysine; alternate modification. Lysine 15 carries the post-translational modification N6-succinyllysine; alternate. Arginine 18 bears the Citrulline; alternate mark. Arginine 18 carries the post-translational modification Asymmetric dimethylarginine; by CARM1; alternate. Lysine 19 and lysine 24 each carry N6-(2-hydroxyisobutyryl)lysine; alternate. Residues lysine 19 and lysine 24 each carry the N6-(beta-hydroxybutyryl)lysine; alternate modification. Lysine 19 and lysine 24 each carry N6-acetyllysine; alternate. N6-methyllysine; alternate is present on residues lysine 19 and lysine 24. Residues lysine 19 and lysine 24 each carry the N6-lactoyllysine; alternate modification. N6-glutaryllysine; alternate occurs at positions 19 and 24. N6-butyryllysine; alternate occurs at positions 19 and 24. The residue at position 27 (arginine 27) is a Citrulline. Position 28 is an N6,N6,N6-trimethyllysine; alternate (lysine 28). Lysine 28 is modified (N6,N6-dimethyllysine; alternate). Lysine 28 carries the N6-(2-hydroxyisobutyryl)lysine; alternate modification. An N6-acetyllysine; alternate modification is found at lysine 28. At lysine 28 the chain carries N6-methyllysine; alternate. Lysine 28 is subject to N6-lactoyllysine; alternate. Residue lysine 28 is modified to N6-glutaryllysine; alternate. An ADP-ribosylserine; alternate modification is found at serine 29. Residue serine 29 is modified to Phosphoserine; alternate; by AURKB, AURKC and RPS6KA5. An N6,N6,N6-trimethyllysine; alternate modification is found at lysine 37. The residue at position 37 (lysine 37) is an N6,N6-dimethyllysine; alternate. Lysine 37 is modified (N6-(2-hydroxyisobutyryl)lysine; alternate). Lysine 37 bears the N6-acetyllysine; alternate mark. Lysine 37 bears the N6-methyllysine; alternate mark. Position 38 is an N6-methyllysine (lysine 38). Tyrosine 42 carries the phosphotyrosine modification. At lysine 57 the chain carries N6,N6,N6-trimethyllysine; alternate. An N6-(2-hydroxyisobutyryl)lysine; alternate modification is found at lysine 57. At lysine 57 the chain carries N6-(beta-hydroxybutyryl)lysine; alternate. Lysine 57 carries the N6-acetyllysine; alternate modification. Lysine 57 carries the N6-lactoyllysine; alternate modification. At lysine 57 the chain carries N6-glutaryllysine; alternate. Position 57 is an N6-succinyllysine; alternate (lysine 57). N6-methyllysine; by EHMT2; alternate is present on lysine 57. Serine 58 is modified (phosphoserine). N6-(2-hydroxyisobutyryl)lysine; alternate occurs at positions 65 and 80. 2 positions are modified to N6-methyllysine; alternate: lysine 65 and lysine 80. Lysine 80 carries the N6,N6,N6-trimethyllysine; alternate modification. At lysine 80 the chain carries N6,N6-dimethyllysine; alternate. Lysine 80 bears the N6-acetyllysine; alternate mark. Lysine 80 is modified (N6-lactoyllysine; alternate). Position 80 is an N6-glutaryllysine; alternate (lysine 80). Lysine 80 carries the post-translational modification N6-succinyllysine; alternate. Threonine 81 carries the phosphothreonine modification. Serine 87 is subject to Phosphoserine. Threonine 108 carries the post-translational modification Phosphothreonine. N6-acetyllysine; alternate is present on residues lysine 116 and lysine 123. An N6-glutaryllysine; alternate mark is found at lysine 116 and lysine 123. Lysine 123 bears the N6-(2-hydroxyisobutyryl)lysine; alternate mark. Lysine 123 carries the post-translational modification N6-methyllysine; alternate. Lysine 123 carries the N6-succinyllysine; alternate modification.

Belongs to the histone H3 family. As to quaternary structure, the nucleosome is a histone octamer containing two molecules each of H2A, H2B, H3 and H4 assembled in one H3-H4 heterotetramer and two H2A-H2B heterodimers. The octamer wraps approximately 147 bp of DNA. Interacts with TONSL; CHAF1A and CHAF1B. Post-translationally, acetylation is generally linked to gene activation. Acetylation on Lys-10 (H3K9ac) impairs methylation at Arg-9 (H3R8me2s). Acetylation on Lys-19 (H3K18ac) and Lys-24 (H3K24ac) favors methylation at Arg-18 (H3R17me). Acetylation at Lys-123 (H3K122ac) by EP300/p300 plays a central role in chromatin structure: localizes at the surface of the histone octamer and stimulates transcription, possibly by promoting nucleosome instability. In terms of processing, citrullination at Arg-9 (H3R8ci) and/or Arg-18 (H3R17ci) by PADI4 impairs methylation and represses transcription. Asymmetric dimethylation at Arg-18 (H3R17me2a) by CARM1 is linked to gene activation. Symmetric dimethylation at Arg-9 (H3R8me2s) by PRMT5 is linked to gene repression. Asymmetric dimethylation at Arg-3 (H3R2me2a) by PRMT6 is linked to gene repression and is mutually exclusive with H3 Lys-5 methylation (H3K4me2 and H3K4me3). H3R2me2a is present at the 3' of genes regardless of their transcription state and is enriched on inactive promoters, while it is absent on active promoters. Post-translationally, methylation at Lys-5 (H3K4me), Lys-37 (H3K36me) and Lys-80 (H3K79me) are linked to gene activation. Methylation at Lys-5 (H3K4me) facilitates subsequent acetylation of H3 and H4. Methylation at Lys-80 (H3K79me) is associated with DNA double-strand break (DSB) responses and is a specific target for TP53BP1. Methylation at Lys-10 (H3K9me) and Lys-28 (H3K27me) are linked to gene repression. Methylation at Lys-10 (H3K9me) is a specific target for HP1 proteins (CBX1, CBX3 and CBX5) and prevents subsequent phosphorylation at Ser-11 (H3S10ph) and acetylation of H3 and H4. Methylation at Lys-5 (H3K4me) and Lys-80 (H3K79me) require preliminary monoubiquitination of H2B at 'Lys-120'. Methylation at Lys-10 (H3K9me) and Lys-28 (H3K27me) are enriched in inactive X chromosome chromatin. Monomethylation at Lys-57 (H3K56me1) by EHMT2/G9A in G1 phase promotes interaction with PCNA and is required for DNA replication. In terms of processing, phosphorylated at Thr-4 (H3T3ph) by HASPIN during prophase and dephosphorylated during anaphase. Phosphorylation at Ser-11 (H3S10ph) by AURKB is crucial for chromosome condensation and cell-cycle progression during mitosis and meiosis. In addition phosphorylation at Ser-11 (H3S10ph) by RPS6KA4 and RPS6KA5 is important during interphase because it enables the transcription of genes following external stimulation, like mitogens, stress, growth factors or UV irradiation and result in the activation of genes, such as c-fos and c-jun. Phosphorylation at Ser-11 (H3S10ph), which is linked to gene activation, prevents methylation at Lys-10 (H3K9me) but facilitates acetylation of H3 and H4. Phosphorylation at Ser-11 (H3S10ph) by AURKB mediates the dissociation of HP1 proteins (CBX1, CBX3 and CBX5) from heterochromatin. Phosphorylation at Ser-11 (H3S10ph) is also an essential regulatory mechanism for neoplastic cell transformation. Phosphorylated at Ser-29 (H3S28ph) by MAP3K20 isoform 1, RPS6KA5 or AURKB during mitosis or upon ultraviolet B irradiation. Phosphorylation at Thr-7 (H3T6ph) by PRKCB is a specific tag for epigenetic transcriptional activation that prevents demethylation of Lys-5 (H3K4me) by LSD1/KDM1A. At centromeres, specifically phosphorylated at Thr-12 (H3T11ph) from prophase to early anaphase, by DAPK3 and PKN1. Phosphorylation at Thr-12 (H3T11ph) by PKN1 or isoform M2 of PKM (PKM2) is a specific tag for epigenetic transcriptional activation that promotes demethylation of Lys-10 (H3K9me) by KDM4C/JMJD2C. Phosphorylation at Tyr-42 (H3Y41ph) by JAK2 promotes exclusion of CBX5 (HP1 alpha) from chromatin. Ubiquitinated. Post-translationally, lysine deamination at Lys-5 (H3K4all) to form allysine is mediated by LOXL2. Allysine formation by LOXL2 only takes place on H3K4me3 and results in gene repression. In terms of processing, butyrylation of histones marks active promoters and competes with histone acetylation. It is present during late spermatogenesis. Succinylation at Lys-80 (H3K79succ) by KAT2A takes place with a maximum frequency around the transcription start sites of genes. It gives a specific tag for epigenetic transcription activation. Desuccinylation at Lys-123 (H3K122succ) by SIRT7 in response to DNA damage promotes chromatin condensation and double-strand breaks (DSBs) repair. Post-translationally, serine ADP-ribosylation constitutes the primary form of ADP-ribosylation of proteins in response to DNA damage. Serine ADP-ribosylation at Ser-11 (H3S10ADPr) is mutually exclusive with phosphorylation at Ser-11 (H3S10ph) and impairs acetylation at Lys-10 (H3K9ac). Expressed in testicular cells.

Its subcellular location is the nucleus. It localises to the chromosome. Its function is as follows. Core component of nucleosome. Nucleosomes wrap and compact DNA into chromatin, limiting DNA accessibility to the cellular machineries which require DNA as a template. Histones thereby play a central role in transcription regulation, DNA repair, DNA replication and chromosomal stability. DNA accessibility is regulated via a complex set of post-translational modifications of histones, also called histone code, and nucleosome remodeling. This chain is Histone H3.1t, found in Homo sapiens (Human).